The sequence spans 388 residues: Chorismate synthase (388 aa).

NADP(+)-binding residues include R39 and R45. FMN is bound by residues 130-132 (RSS), 251-252 (NA), G296, 311-315 (KPIPT), and R337.

Belongs to the chorismate synthase family. In terms of assembly, homotetramer. It depends on FMNH2 as a cofactor.

The catalysed reaction is 5-O-(1-carboxyvinyl)-3-phosphoshikimate = chorismate + phosphate. The protein operates within metabolic intermediate biosynthesis; chorismate biosynthesis; chorismate from D-erythrose 4-phosphate and phosphoenolpyruvate: step 7/7. Functionally, catalyzes the anti-1,4-elimination of the C-3 phosphate and the C-6 proR hydrogen from 5-enolpyruvylshikimate-3-phosphate (EPSP) to yield chorismate, which is the branch point compound that serves as the starting substrate for the three terminal pathways of aromatic amino acid biosynthesis. This reaction introduces a second double bond into the aromatic ring system. The chain is Chorismate synthase from Streptococcus pyogenes serotype M28 (strain MGAS6180).